The chain runs to 75 residues: Brevinin-2SN1 (75 aa).

Residues 1-22 (MFTMKKPLLFLFFLGTISLSFC) form the signal peptide. Positions 23 to 40 (EEERGADEDDEVEMTEEE) are cleaved as a propeptide — removed in mature form. A disulfide bridge links C69 with C75.

Belongs to the frog skin active peptide (FSAP) family. Brevinin subfamily. In terms of tissue distribution, expressed by the skin glands.

The protein resides in the secreted. Its function is as follows. Antimicrobial peptide. Active against some Gram-negative and a variety of Gram-positive bacterial strains. Active against fungus C.glabrata 090902 but not against C.albicans ATCC 10231. Shows hemolytic activity against human erythrocytes. This is Brevinin-2SN1 from Sylvirana spinulosa (Fine-spined frog).